A 301-amino-acid chain; its full sequence is MTGKEENKQQQHVNFPWKRLVAGAVAGTADVWACHPLDRIKTQLQNNPGKSIVGTFGDIVSKGKGFTGGVNALYEGILPMTAEAIFKVGIRYFAFSWFTEQYKTTVYKGETLNKKQQFGANLLGGAFAGTIESFVVVIPCELLKVRHMTQEHNKSFGTVFRDVLREEGFQGLYKGGSATLLRQITNHMIRFPTFYAISDYLKGGDHSVHLPVWQNLSAGAIAGTASTLFNNPLDTIKTRMQKQGQNQTTMQVVRGIYQETGVKGYWAGVIPRILRVAPGQAITWAVVELVMGILEPSSKKH.

The Mitochondrial intermembrane segment spans residues 1–19 (MTGKEENKQQQHVNFPWKR). Solcar repeat units lie at residues 14-101 (NFPW…FTEQ), 116-200 (QQFG…ISDY), and 210-293 (LPVW…VMGI). Residues 20 to 37 (LVAGAVAGTADVWACHPL) form a helical membrane-spanning segment. Residues 38-65 (DRIKTQLQNNPGKSIVGTFGDIVSKGKG) are Mitochondrial matrix-facing. A helical membrane pass occupies residues 66–86 (FTGGVNALYEGILPMTAEAIF). The Mitochondrial intermembrane portion of the chain corresponds to 87 to 117 (KVGIRYFAFSWFTEQYKTTVYKGETLNKKQQ). Residues 118-138 (FGANLLGGAFAGTIESFVVVI) traverse the membrane as a helical segment. Over 139 to 174 (PCELLKVRHMTQEHNKSFGTVFRDVLREEGFQGLYK) the chain is Mitochondrial matrix. The helical transmembrane segment at 175 to 191 (GGSATLLRQITNHMIRF) threads the bilayer. Residues 192-212 (PTFYAISDYLKGGDHSVHLPV) lie on the Mitochondrial intermembrane side of the membrane. Residues 213-229 (WQNLSAGAIAGTASTLF) form a helical membrane-spanning segment. At 230–275 (NNPLDTIKTRMQKQGQNQTTMQVVRGIYQETGVKGYWAGVIPRILR) the chain is on the mitochondrial matrix side. Residues 276-296 (VAPGQAITWAVVELVMGILEP) form a helical membrane-spanning segment. The Mitochondrial intermembrane segment spans residues 297 to 301 (SSKKH).

The protein belongs to the mitochondrial carrier (TC 2.A.29) family.

The protein localises to the mitochondrion inner membrane. Functionally, mitochondrial solute carriers shuttle metabolites, nucleotides, and cofactors through the mitochondrial inner membrane. In Dictyostelium discoideum (Social amoeba), this protein is Mitochondrial substrate carrier family protein Z (mcfZ).